The primary structure comprises 743 residues: MSLLLEPSHKQIKEEKLYQQMGLSDEEFALIESIIGRLPNYTETGIFSVMWSEHCSYKNSKPVLSKFPTKGEHVLQGPGEGAGIVDIGDNQAVVFKIESHNHPSAIEPYQGAATGVGGIIRDVFSMGARPIAVLNSLRFGELTSPRVKYLFEEVVAGIAGYGNCIGIPTVGGEVHFDQSYEGNPLVNAMCVGLINHEDIKKGQAKGVGNTVMYVGAKTGRDGIHGATFASEEFSDESEEKRSAVQVGDPFMEKLLLEACLEVIKNDALVGIQDMGAAGLTSSSAEMASKAGSGIEMNLDLIPQRETGMSAYEMMLSESQERMLLVIEKGREQEIIDIFEKYDLEAVSVGHVTDDKMLRLLHQGEVVCELPVDALAEEAPVYHKPSSEPAYYREFLETKVEAPAITDAAQTLKQLLQQPTIASKEWVYDQYDYMVRTNTVVAPGSDAGVLRIRGTKKALAMTTDCNARYLYLDPEVGGKIAVAEAARNIVCSGARPLAVTDNLNFGNPEKPEIFWQIEKSADGISEACRTLSTPVIGGNVSLYNESNGTAIYPTPVIGMVGLVEDTAHITTKSFQQAGDVIFVIGETKEEFAGSELQKMTEGRIYGKAPEIDLDVELARQEALLAAIQNGLVQSAHDVSEGGLGVALAESTFGTDGLGADIQIDLDSEASLFSETQSRFVVTVKPEHREAFAAAVKDAKEVGTVTNDGVFTVKNQEGQQWIHAAVNELERAWKGAIPCLLKSEA.

H54 is a catalytic residue. Y57 and K96 together coordinate ATP. E98 provides a ligand contact to Mg(2+). Residues 99–102 and R121 contribute to the substrate site; that span reads SHNH. Catalysis depends on H100, which acts as the Proton acceptor. Position 122 (D122) interacts with Mg(2+). Q245 is a binding site for substrate. D273 is a Mg(2+) binding site. 317–319 provides a ligand contact to substrate; sequence ESQ. The ATP site is built by D500 and G537. Residue N538 participates in Mg(2+) binding. S540 lines the substrate pocket.

It belongs to the FGAMS family. As to quaternary structure, monomer. Part of the FGAM synthase complex composed of 1 PurL, 1 PurQ and 2 PurS subunits.

Its subcellular location is the cytoplasm. The catalysed reaction is N(2)-formyl-N(1)-(5-phospho-beta-D-ribosyl)glycinamide + L-glutamine + ATP + H2O = 2-formamido-N(1)-(5-O-phospho-beta-D-ribosyl)acetamidine + L-glutamate + ADP + phosphate + H(+). Its pathway is purine metabolism; IMP biosynthesis via de novo pathway; 5-amino-1-(5-phospho-D-ribosyl)imidazole from N(2)-formyl-N(1)-(5-phospho-D-ribosyl)glycinamide: step 1/2. Its function is as follows. Part of the phosphoribosylformylglycinamidine synthase complex involved in the purines biosynthetic pathway. Catalyzes the ATP-dependent conversion of formylglycinamide ribonucleotide (FGAR) and glutamine to yield formylglycinamidine ribonucleotide (FGAM) and glutamate. The FGAM synthase complex is composed of three subunits. PurQ produces an ammonia molecule by converting glutamine to glutamate. PurL transfers the ammonia molecule to FGAR to form FGAM in an ATP-dependent manner. PurS interacts with PurQ and PurL and is thought to assist in the transfer of the ammonia molecule from PurQ to PurL. In Bacillus pumilus (strain SAFR-032), this protein is Phosphoribosylformylglycinamidine synthase subunit PurL.